The sequence spans 393 residues: Formate-dependent phosphoribosylglycinamide formyltransferase (393 aa).

Residues 15-16 and Glu75 contribute to the N(1)-(5-phospho-beta-D-ribosyl)glycinamide site; that span reads EL. Residues Arg107, Lys148, 153 to 158, 188 to 191, and Glu196 contribute to the ATP site; these read SSGKGQ and EEYI. An ATP-grasp domain is found at 112–302; the sequence is NLAAEKLAIK…EFELHLRAIL (191 aa). Mg(2+) contacts are provided by Glu261 and Glu273. N(1)-(5-phospho-beta-D-ribosyl)glycinamide contacts are provided by residues Asp280, Lys350, and 357–358; that span reads RR.

It belongs to the PurK/PurT family. In terms of assembly, homodimer.

The enzyme catalyses N(1)-(5-phospho-beta-D-ribosyl)glycinamide + formate + ATP = N(2)-formyl-N(1)-(5-phospho-beta-D-ribosyl)glycinamide + ADP + phosphate + H(+). The protein operates within purine metabolism; IMP biosynthesis via de novo pathway; N(2)-formyl-N(1)-(5-phospho-D-ribosyl)glycinamide from N(1)-(5-phospho-D-ribosyl)glycinamide (formate route): step 1/1. In terms of biological role, involved in the de novo purine biosynthesis. Catalyzes the transfer of formate to 5-phospho-ribosyl-glycinamide (GAR), producing 5-phospho-ribosyl-N-formylglycinamide (FGAR). Formate is provided by PurU via hydrolysis of 10-formyl-tetrahydrofolate. In Prochlorococcus marinus (strain SARG / CCMP1375 / SS120), this protein is Formate-dependent phosphoribosylglycinamide formyltransferase.